The chain runs to 283 residues: Mau operon transcriptional activator (283 aa).

Residues methionine 1 to threonine 58 enclose the HTH lysR-type domain. A DNA-binding region (H-T-H motif) is located at residues phenylalanine 18 to alanine 37.

This sequence belongs to the LysR transcriptional regulatory family.

Transcriptional activator of the mau genes involved in methylamine metabolism. The chain is Mau operon transcriptional activator (mauR) from Paracoccus denitrificans.